Consider the following 72-residue polypeptide: Translation initiation factor IF-1 (72 aa).

An S1-like domain is found at 1-72; it reads MAKDDVIEVD…DKGRITFRYK (72 aa).

This sequence belongs to the IF-1 family. As to quaternary structure, component of the 30S ribosomal translation pre-initiation complex which assembles on the 30S ribosome in the order IF-2 and IF-3, IF-1 and N-formylmethionyl-tRNA(fMet); mRNA recruitment can occur at any time during PIC assembly.

The protein resides in the cytoplasm. Functionally, one of the essential components for the initiation of protein synthesis. Stabilizes the binding of IF-2 and IF-3 on the 30S subunit to which N-formylmethionyl-tRNA(fMet) subsequently binds. Helps modulate mRNA selection, yielding the 30S pre-initiation complex (PIC). Upon addition of the 50S ribosomal subunit IF-1, IF-2 and IF-3 are released leaving the mature 70S translation initiation complex. This is Translation initiation factor IF-1 from Nitratiruptor sp. (strain SB155-2).